The following is a 354-amino-acid chain: UDP-N-acetylglucosamine--N-acetylmuramyl-(pentapeptide) pyrophosphoryl-undecaprenol N-acetylglucosamine transferase (354 aa).

UDP-N-acetyl-alpha-D-glucosamine-binding positions include 15-17 (TGG), Asn-127, Arg-163, Ser-191, Ile-244, 263-268 (ALTVSE), and Gln-288.

Belongs to the glycosyltransferase 28 family. MurG subfamily.

It is found in the cell inner membrane. The enzyme catalyses di-trans,octa-cis-undecaprenyl diphospho-N-acetyl-alpha-D-muramoyl-L-alanyl-D-glutamyl-meso-2,6-diaminopimeloyl-D-alanyl-D-alanine + UDP-N-acetyl-alpha-D-glucosamine = di-trans,octa-cis-undecaprenyl diphospho-[N-acetyl-alpha-D-glucosaminyl-(1-&gt;4)]-N-acetyl-alpha-D-muramoyl-L-alanyl-D-glutamyl-meso-2,6-diaminopimeloyl-D-alanyl-D-alanine + UDP + H(+). The protein operates within cell wall biogenesis; peptidoglycan biosynthesis. In terms of biological role, cell wall formation. Catalyzes the transfer of a GlcNAc subunit on undecaprenyl-pyrophosphoryl-MurNAc-pentapeptide (lipid intermediate I) to form undecaprenyl-pyrophosphoryl-MurNAc-(pentapeptide)GlcNAc (lipid intermediate II). This is UDP-N-acetylglucosamine--N-acetylmuramyl-(pentapeptide) pyrophosphoryl-undecaprenol N-acetylglucosamine transferase from Aliivibrio fischeri (strain ATCC 700601 / ES114) (Vibrio fischeri).